Here is a 110-residue protein sequence, read N- to C-terminus: MEALSRHRTARISPQKCRLVADQIRGLNVAAALDLLTFSNKKAAGLVKKVLQAAIANAEHNEGADVDELRVKTVFVDEGPVLKRMSPRAKGRANRILKRTSHITVLVSDN.

The protein belongs to the universal ribosomal protein uL22 family. In terms of assembly, part of the 50S ribosomal subunit.

Functionally, this protein binds specifically to 23S rRNA; its binding is stimulated by other ribosomal proteins, e.g. L4, L17, and L20. It is important during the early stages of 50S assembly. It makes multiple contacts with different domains of the 23S rRNA in the assembled 50S subunit and ribosome. The globular domain of the protein is located near the polypeptide exit tunnel on the outside of the subunit, while an extended beta-hairpin is found that lines the wall of the exit tunnel in the center of the 70S ribosome. In Methylococcus capsulatus (strain ATCC 33009 / NCIMB 11132 / Bath), this protein is Large ribosomal subunit protein uL22.